The chain runs to 388 residues: Succinate--CoA ligase [ADP-forming] subunit beta (388 aa).

Positions 9–244 (KQLFARYGLP…QSQEDPREAQ (236 aa)) constitute an ATP-grasp domain. ATP is bound by residues K46, 53-55 (GRG), E99, T102, and E107. Mg(2+) is bound by residues N199 and D213. Substrate is bound by residues N264 and 321-323 (GIV).

It belongs to the succinate/malate CoA ligase beta subunit family. As to quaternary structure, heterotetramer of two alpha and two beta subunits. The cofactor is Mg(2+).

It catalyses the reaction succinate + ATP + CoA = succinyl-CoA + ADP + phosphate. The enzyme catalyses GTP + succinate + CoA = succinyl-CoA + GDP + phosphate. It participates in carbohydrate metabolism; tricarboxylic acid cycle; succinate from succinyl-CoA (ligase route): step 1/1. Its function is as follows. Succinyl-CoA synthetase functions in the citric acid cycle (TCA), coupling the hydrolysis of succinyl-CoA to the synthesis of either ATP or GTP and thus represents the only step of substrate-level phosphorylation in the TCA. The beta subunit provides nucleotide specificity of the enzyme and binds the substrate succinate, while the binding sites for coenzyme A and phosphate are found in the alpha subunit. The chain is Succinate--CoA ligase [ADP-forming] subunit beta from Shigella dysenteriae serotype 1 (strain Sd197).